The sequence spans 328 residues: Serine/threonine-protein phosphatase PP2A-2 catalytic subunit (328 aa).

Mn(2+)-binding residues include Asp-76, His-78, Asp-104, and Asn-136. The active-site Proton donor is His-137. Mn(2+)-binding residues include His-186 and His-260. Position 328 is a leucine methyl ester (Leu-328).

It belongs to the PPP phosphatase family. PP-2A subfamily. It depends on Mn(2+) as a cofactor.

It carries out the reaction O-phospho-L-seryl-[protein] + H2O = L-seryl-[protein] + phosphate. The enzyme catalyses O-phospho-L-threonyl-[protein] + H2O = L-threonyl-[protein] + phosphate. The sequence is that of Serine/threonine-protein phosphatase PP2A-2 catalytic subunit (PP2A-2) from Blumeria hordei (Barley powdery mildew).